Consider the following 556-residue polypeptide: Potassium-transporting ATPase potassium-binding subunit (556 aa).

10 consecutive transmembrane segments (helical) span residues 5–25, 65–85, 133–153, 176–196, 249–269, 283–303, 377–397, 415–435, 483–503, and 526–546; these read LAGILFLASLVIALVAVHVPL, SVLAFSAVSLLFLFILQLVQG, GLAVQNFVSAAVGMAVAIALV, IRILLPISVIAAILLITGGAI, PTTWTNWIEIFLLLVIAFSLP, YAIVGVQAVLAVISWSATLFF, AGLYGILILAVITVFVAGLMV, LAATYFLVTPLIVLTGTAVAM, ALGLAMVFGRFLPIILALALA, and FVGMVAGVTLILVALTFLPML.

Belongs to the KdpA family. As to quaternary structure, the system is composed of three essential subunits: KdpA, KdpB and KdpC.

The protein resides in the cell membrane. Functionally, part of the high-affinity ATP-driven potassium transport (or Kdp) system, which catalyzes the hydrolysis of ATP coupled with the electrogenic transport of potassium into the cytoplasm. This subunit binds the extracellular potassium ions and delivers the ions to the membrane domain of KdpB through an intramembrane tunnel. The chain is Potassium-transporting ATPase potassium-binding subunit from Mycolicibacterium vanbaalenii (strain DSM 7251 / JCM 13017 / BCRC 16820 / KCTC 9966 / NRRL B-24157 / PYR-1) (Mycobacterium vanbaalenii).